The chain runs to 85 residues: N.vectensis toxin 1 4 (85 aa).

Residues 1 to 20 (MASFKIVIVCLALLVAVASA) form the signal peptide. Positions 21–36 (RRRDMMSDDELDYHYS) are excised as a propeptide. 3 disulfides stabilise this stretch: Cys42–Cys82, Cys44–Cys72, and Cys65–Cys83.

This sequence belongs to the sea anemone sodium channel inhibitory toxin family. Type II subfamily. As to expression, expressed in ectodermal glands and in clumps outside of the extodermal layer. Is not expressed in nematocytes. In adult female tissues, shows similar expression levels in mesenteries (gametes-producing tissue), tentacles, pharynx and physa.

The protein localises to the secreted. Binds to site 3 of voltage-gated sodium channels and inhibits the inactivation process. Is highly active on DmNav1/TipE (drosophila) and is only extremely weakly active on rat Nav1.4-beta-1/SCN4A-SCN1B, and on human Nav1.5-beta-1/SCN5A-beta-1. This reveals high specificity for arthropod over mammalian channels. In vivo, when released into the medium, this recombinant toxin induces impaired swimming, paralysis and death of the crustacean A.nauplii within several hours. Also causes paralysis of cherry shrimps immediately after injection at very low doses. Its effect on zebrafish (D.rerio) larvae is also rapid, since it induces tail twitching accompanied by impaired swimming after 20 minutes and complete paralysis within 45 minutes. It has also been observed to cause death of zebrafish larvae within 1 hour. This chain is N.vectensis toxin 1 4, found in Nematostella vectensis (Starlet sea anemone).